The following is a 292-amino-acid chain: Small ribosomal subunit protein uS2 (292 aa).

The interval 230 to 292 (RSGGAPGSEK…KKEAGSGEEA (63 aa)) is disordered. 2 stretches are compositionally biased toward basic and acidic residues: residues 247–259 (EWER…KTEA) and 271–292 (PAKE…GEEA).

This sequence belongs to the universal ribosomal protein uS2 family.

In Thermobifida fusca (strain YX), this protein is Small ribosomal subunit protein uS2.